A 471-amino-acid chain; its full sequence is ATP synthase subunit beta (471 aa).

ATP is bound at residue 153 to 160; sequence GGAGVGKT.

This sequence belongs to the ATPase alpha/beta chains family. F-type ATPases have 2 components, CF(1) - the catalytic core - and CF(0) - the membrane proton channel. CF(1) has five subunits: alpha(3), beta(3), gamma(1), delta(1), epsilon(1). CF(0) has four main subunits: a(1), b(1), b'(1) and c(9-12).

Its subcellular location is the cell membrane. It carries out the reaction ATP + H2O + 4 H(+)(in) = ADP + phosphate + 5 H(+)(out). Produces ATP from ADP in the presence of a proton gradient across the membrane. The catalytic sites are hosted primarily by the beta subunits. This Roseiflexus sp. (strain RS-1) protein is ATP synthase subunit beta.